The primary structure comprises 218 residues: Glutathione S-transferase Mu 7 (218 aa).

The 87-residue stretch at 2–88 folds into the GST N-terminal domain; sequence PMTLGYWDIR…YLGRKHNLCG (87 aa). Glutathione contacts are provided by residues 7-8, 46-50, 59-60, and 72-73; these read YW, WLNEK, NL, and QS. Positions 90–208 constitute a GST C-terminal domain; the sequence is TEEERIRVDI…KSSRFLPRPL (119 aa). A substrate-binding site is contributed by tyrosine 116.

This sequence belongs to the GST superfamily. Mu family. Homodimer.

It localises to the cytoplasm. It carries out the reaction RX + glutathione = an S-substituted glutathione + a halide anion + H(+). Its function is as follows. Conjugation of reduced glutathione to a wide number of exogenous and endogenous hydrophobic electrophiles. In Rattus norvegicus (Rat), this protein is Glutathione S-transferase Mu 7.